The chain runs to 704 residues: Glycine--tRNA ligase beta subunit (704 aa).

Belongs to the class-II aminoacyl-tRNA synthetase family. In terms of assembly, tetramer of two alpha and two beta subunits.

It localises to the cytoplasm. It carries out the reaction tRNA(Gly) + glycine + ATP = glycyl-tRNA(Gly) + AMP + diphosphate. This chain is Glycine--tRNA ligase beta subunit, found in Rhizobium johnstonii (strain DSM 114642 / LMG 32736 / 3841) (Rhizobium leguminosarum bv. viciae).